A 784-amino-acid chain; its full sequence is Probable leucine-rich repeat receptor-like protein kinase IMK3 (784 aa).

An N-terminal signal peptide occupies residues 1–48 (MEFITQNQAITSLSMINTDIDQPKASLRSRFLLHLIICLLFFVPPCSS). The Extracellular portion of the chain corresponds to 49 to 409 (QAWDGVVITQ…PSHRNLSTKD (361 aa)). A glycan (N-linked (GlcNAc...) asparagine) is linked at asparagine 82. LRR repeat units follow at residues 126-148 (ALRKLSLHDNNLGGSIPMSLGLI), 150-172 (NLRGVQLFNNRLTGSIPASLGVS), 174-197 (FLQTLDLSNNLLSEIIPPNLADSS), 198-220 (KLLRLNLSFNSLSGQIPVSLSRS), 222-242 (SLQFLALDHNNLSGPILDTWG), 247-268 (NLRVLSLDHNSLSGPFPFSLCN), 271-294 (QLQDFSFSHNRIRGTLPSELSKLT), 295-317 (KLRKMDISGNSVSGHIPETLGNI), 319-342 (SLIHLDLSQNKLTGEIPISISDLE), and 343-365 (SLNFFNVSYNNLSGPVPTLLSQK). Residues asparagine 203, asparagine 232, and asparagine 268 are each glycosylated (N-linked (GlcNAc...) asparagine). A glycan (N-linked (GlcNAc...) asparagine) is linked at asparagine 316. N-linked (GlcNAc...) asparagine glycosylation is found at asparagine 348, asparagine 353, asparagine 367, and asparagine 404. The helical transmembrane segment at 410–430 (IILIASGALLIVMLILVCVLC) threads the bilayer. At 431–784 (CLLRKKANET…VPEASASTSQ (354 aa)) the chain is on the cytoplasmic side. The tract at residues 441 to 467 (KAKGGEAGPGAVAAKTEKGGEAEAGGE) is disordered. In terms of domain architecture, Protein kinase spans 488 to 773 (CATAEIMGKS…TTATTSEPLI (286 aa)). ATP is bound by residues 494–502 (MGKSTYGTV) and lysine 516. The disordered stretch occupies residues 760-784 (RPEETTATTSEPLIDVPEASASTSQ).

This sequence belongs to the protein kinase superfamily. Ser/Thr protein kinase family. As to quaternary structure, interacts with AGL24. Autophosphorylated. In terms of tissue distribution, expressed in meristems, including roots, vegetative, inflorescence and floral meristems, and in embryos.

Its subcellular location is the cell membrane. It carries out the reaction L-seryl-[protein] + ATP = O-phospho-L-seryl-[protein] + ADP + H(+). The catalysed reaction is L-threonyl-[protein] + ATP = O-phospho-L-threonyl-[protein] + ADP + H(+). In terms of biological role, can phosphorylate AGL24. The polypeptide is Probable leucine-rich repeat receptor-like protein kinase IMK3 (IMK3) (Arabidopsis thaliana (Mouse-ear cress)).